An 886-amino-acid chain; its full sequence is Protein translocase subunit SecA (886 aa).

Residues glutamine 85, 103 to 107 (GEGKT), and aspartate 492 each bind ATP. The segment covering 841-864 (RVVENRYAEEGPKQPARRENKVGR) has biased composition (basic and acidic residues). Residues 841 to 866 (RVVENRYAEEGPKQPARRENKVGRND) form a disordered region. 4 residues coordinate Zn(2+): cysteine 868, cysteine 870, cysteine 879, and cysteine 880.

Belongs to the SecA family. As to quaternary structure, monomer and homodimer. Part of the essential Sec protein translocation apparatus which comprises SecA, SecYEG and auxiliary proteins SecDF. Other proteins may also be involved. Zn(2+) serves as cofactor.

It is found in the cell membrane. The protein resides in the cytoplasm. The catalysed reaction is ATP + H2O + cellular proteinSide 1 = ADP + phosphate + cellular proteinSide 2.. Part of the Sec protein translocase complex. Interacts with the SecYEG preprotein conducting channel. Has a central role in coupling the hydrolysis of ATP to the transfer of proteins into and across the cell membrane, serving as an ATP-driven molecular motor driving the stepwise translocation of polypeptide chains across the membrane. This chain is Protein translocase subunit SecA, found in Pelotomaculum thermopropionicum (strain DSM 13744 / JCM 10971 / SI).